Here is a 285-residue protein sequence, read N- to C-terminus: S-methyl-5'-thioadenosine phosphorylase (285 aa).

Residues Ser-10, 52-53 (RH), and 85-86 (TA) contribute to the phosphate site. Substrate is bound at residue Met-188. Position 189 (Thr-189) interacts with phosphate. A substrate-binding site is contributed by 212-214 (DYD).

The protein belongs to the PNP/MTAP phosphorylase family. MTAP subfamily. As to quaternary structure, homotrimer.

Its subcellular location is the cytoplasm. It localises to the nucleus. It catalyses the reaction S-methyl-5'-thioadenosine + phosphate = 5-(methylsulfanyl)-alpha-D-ribose 1-phosphate + adenine. The protein operates within amino-acid biosynthesis; L-methionine biosynthesis via salvage pathway; S-methyl-5-thio-alpha-D-ribose 1-phosphate from S-methyl-5'-thioadenosine (phosphorylase route): step 1/1. In terms of biological role, catalyzes the reversible phosphorylation of S-methyl-5'-thioadenosine (MTA) to adenine and 5-methylthioribose-1-phosphate. Involved in the breakdown of MTA, a major by-product of polyamine biosynthesis. Responsible for the first step in the methionine salvage pathway after MTA has been generated from S-adenosylmethionine. Has broad substrate specificity with 6-aminopurine nucleosides as preferred substrates. This chain is S-methyl-5'-thioadenosine phosphorylase, found in Caenorhabditis briggsae.